A 689-amino-acid polypeptide reads, in one-letter code: DNA ligase (689 aa).

Residues 40–44 (DAEYD), 89–90 (SL), and glutamate 121 contribute to the NAD(+) site. The active-site N6-AMP-lysine intermediate is lysine 123. Arginine 144, glutamate 179, lysine 295, and lysine 319 together coordinate NAD(+). Zn(2+) contacts are provided by cysteine 413, cysteine 416, cysteine 431, and cysteine 437. The region spanning 610–689 (KEHSSLTGKI…EEWLTIVNNV (80 aa)) is the BRCT domain.

The protein belongs to the NAD-dependent DNA ligase family. LigA subfamily. It depends on Mg(2+) as a cofactor. Mn(2+) serves as cofactor.

The enzyme catalyses NAD(+) + (deoxyribonucleotide)n-3'-hydroxyl + 5'-phospho-(deoxyribonucleotide)m = (deoxyribonucleotide)n+m + AMP + beta-nicotinamide D-nucleotide.. In terms of biological role, DNA ligase that catalyzes the formation of phosphodiester linkages between 5'-phosphoryl and 3'-hydroxyl groups in double-stranded DNA using NAD as a coenzyme and as the energy source for the reaction. It is essential for DNA replication and repair of damaged DNA. This Rickettsia canadensis (strain McKiel) protein is DNA ligase.